Consider the following 598-residue polypeptide: MRIEDFSLKNVSSSPGVYLMKDSQGVVLYVGKAKNLRNRLSSYLQKNGDSRERIPFLMKRTADIDTIVVSNETEALLLENNLIKKYQPRYNVLLKDDKTFFCLSISLQHPWPKIEAIRTRALSPSKKKQLLFGPYVSAEACYALLEVISHWFPLRTCSDREFSTRQRPCVLYEMKRCLAPCVGFCSQTEYQETLEKAILFLKGEVDTTIANLEEAIKKASQEHKFEHAAALYRTLTLIRQTMAKQHVEKFQAYDIDVLGLYRKGPLAIISVLSVYSGKLLGARHFTFPENAQEDSSLFSSFILQYYAENTRIPKQIFVPVSPDSPELPYLLNAAEPPKIRCPKTEYGKELLALAHKNAAEQAKPLNSITLPYEELQQLFKFSQYPNRIECYDNAHLQGEHNVGVYIVFEKGSFSPKQYRTFSITSHGDDLAAFEEVLTRRFRSLTTELPDLIVIDGGRNQFRRAQHILEKLNLTGIAVVSIAKESGNHSRGLQQEKLFCEAFPQGILLNPTSEILQFFQLLRDEAHRFAINRYRNKHSKAILTTKKIPGIGKTKTTHLLQKFKSWKRILSASEEELKTVQGLTKKDIQRIQEEGKRAE.

Residues 13-92 (SSPGVYLMKD…IKKYQPRYNV (80 aa)) form the GIY-YIG domain. The UVR domain occupies 206–241 (DTTIANLEEAIKKASQEHKFEHAAALYRTLTLIRQT).

Belongs to the UvrC family. As to quaternary structure, interacts with UvrB in an incision complex.

It localises to the cytoplasm. The UvrABC repair system catalyzes the recognition and processing of DNA lesions. UvrC both incises the 5' and 3' sides of the lesion. The N-terminal half is responsible for the 3' incision and the C-terminal half is responsible for the 5' incision. The polypeptide is UvrABC system protein C (Chlamydia muridarum (strain MoPn / Nigg)).